A 351-amino-acid polypeptide reads, in one-letter code: Meiotically up-regulated gene 1 protein (351 aa).

It localises to the cytoplasm. Required for correct meiotic chromosome segregation. The sequence is that of Meiotically up-regulated gene 1 protein (mug1) from Schizosaccharomyces pombe (strain 972 / ATCC 24843) (Fission yeast).